The primary structure comprises 465 residues: Hepatocyte nuclear factor 6 (465 aa).

4 disordered regions span residues 17 to 55 (SHEPVPAPADLLGGSPHARSSVAHRGSHLPPAHPRSMGM), 120 to 141 (DKFPHHHHHHHHHHHPHHHQRL), 264 to 290 (LLGTAREPNPSVTGAQVSNGSNSGQME), and 442 to 465 (DKWQDEGSSNSGNSSSSSSTCTKA). Basic residues predominate over residues 123–140 (PHHHHHHHHHHHPHHHQR). Polar residues predominate over residues 273-288 (PSVTGAQVSNGSNSGQ). Positions 283-369 (GSNSGQMEEI…QRMSALRLAA (87 aa)) form a DNA-binding region, CUT. Positions 385 to 444 (PKKPRLVFTDVQRRTLHAIFKENKRPSKELQITISQQLGLELSTVSNFFMNARRRSLDKW) form a DNA-binding region, homeobox. The span at 448-465 (GSSNSGNSSSSSSTCTKA) shows a compositional bias: low complexity.

This sequence belongs to the CUT homeobox family. Binds DNA as a monomer. In terms of tissue distribution, highly expressed in liver; lower expression in testis and skin.

It is found in the nucleus. Transcriptional activator. Binds the consensus sequence 5'-DHWATTGAYTWWD-3' on a variety of gene promoters such as those of HNF3B and TTR. Important for liver genes transcription. The sequence is that of Hepatocyte nuclear factor 6 (ONECUT1) from Homo sapiens (Human).